The sequence spans 344 residues: uncharacterized protein (344 aa).

The Cytoplasmic segment spans residues 1–98 (MIDFVKSRDT…NNDEIGIWNY (98 aa)). A helical transmembrane segment spans residues 99 to 119 (ISVAEMGGVLLFLSYWIWTCL). A topological domain (lumenal) is located at residue H120. Residues 121–141 (FSKIIFPAQKVICLYIFLFAL) form a helical membrane-spanning segment. At 142–198 (NQTLQECIEEYVFSSECIKYRQFYSVYEIIDFLRTNFYRLFVIYCALGFGITRTVPK) the chain is on the cytoplasmic side. The chain crosses the membrane as a helical span at residues 199–219 (YLMIKGISIVIALCSVYWISL). The Lumenal portion of the chain corresponds to 220–222 (YKD). Residues 223–243 (VYVVSEIFDMIQYEVSPAIWV) traverse the membrane as a helical segment. Residues 244–273 (YSICHLLKQCTSVTTYENASKARFFRRMLN) lie on the Cytoplasmic side of the membrane. A helical membrane pass occupies residues 274–294 (AFIFIFCASPMLHYLSNIIFG). Residues 295–344 (NFDYRLSVIIGDLFTFMEKIAFPCYIMFPTHNEALAYNRNVAEEAQEKMI) are Lumenal-facing.

It belongs to the UPF0742 family.

It localises to the endoplasmic reticulum. Its subcellular location is the membrane. This is an uncharacterized protein from Schizosaccharomyces pombe (strain 972 / ATCC 24843) (Fission yeast).